We begin with the raw amino-acid sequence, 271 residues long: Exosome complex component Rrp42 (271 aa).

Belongs to the RNase PH family. Rrp42 subfamily. As to quaternary structure, component of the archaeal exosome complex. Forms a hexameric ring-like arrangement composed of 3 Rrp41-Rrp42 heterodimers. The hexameric ring associates with a trimer of Rrp4 and/or Csl4 subunits.

Its subcellular location is the cytoplasm. Non-catalytic component of the exosome, which is a complex involved in RNA degradation. Contributes to the structuring of the Rrp41 active site. This Methanothermobacter thermautotrophicus (strain ATCC 29096 / DSM 1053 / JCM 10044 / NBRC 100330 / Delta H) (Methanobacterium thermoautotrophicum) protein is Exosome complex component Rrp42.